A 399-amino-acid polypeptide reads, in one-letter code: Tryptophan synthase beta chain (399 aa).

Lysine 92 carries the post-translational modification N6-(pyridoxal phosphate)lysine.

Belongs to the TrpB family. Tetramer of two alpha and two beta chains. The cofactor is pyridoxal 5'-phosphate.

It carries out the reaction (1S,2R)-1-C-(indol-3-yl)glycerol 3-phosphate + L-serine = D-glyceraldehyde 3-phosphate + L-tryptophan + H2O. It participates in amino-acid biosynthesis; L-tryptophan biosynthesis; L-tryptophan from chorismate: step 5/5. In terms of biological role, the beta subunit is responsible for the synthesis of L-tryptophan from indole and L-serine. In Legionella pneumophila subsp. pneumophila (strain Philadelphia 1 / ATCC 33152 / DSM 7513), this protein is Tryptophan synthase beta chain.